Here is a 369-residue protein sequence, read N- to C-terminus: UDP-N-acetylglucosamine--N-acetylmuramyl-(pentapeptide) pyrophosphoryl-undecaprenol N-acetylglucosamine transferase (369 aa).

UDP-N-acetyl-alpha-D-glucosamine-binding positions include 16–18 (TGG), asparagine 130, arginine 171, serine 203, isoleucine 253, and glutamine 298.

The protein belongs to the glycosyltransferase 28 family. MurG subfamily.

It is found in the cell inner membrane. The enzyme catalyses di-trans,octa-cis-undecaprenyl diphospho-N-acetyl-alpha-D-muramoyl-L-alanyl-D-glutamyl-meso-2,6-diaminopimeloyl-D-alanyl-D-alanine + UDP-N-acetyl-alpha-D-glucosamine = di-trans,octa-cis-undecaprenyl diphospho-[N-acetyl-alpha-D-glucosaminyl-(1-&gt;4)]-N-acetyl-alpha-D-muramoyl-L-alanyl-D-glutamyl-meso-2,6-diaminopimeloyl-D-alanyl-D-alanine + UDP + H(+). It functions in the pathway cell wall biogenesis; peptidoglycan biosynthesis. Cell wall formation. Catalyzes the transfer of a GlcNAc subunit on undecaprenyl-pyrophosphoryl-MurNAc-pentapeptide (lipid intermediate I) to form undecaprenyl-pyrophosphoryl-MurNAc-(pentapeptide)GlcNAc (lipid intermediate II). The protein is UDP-N-acetylglucosamine--N-acetylmuramyl-(pentapeptide) pyrophosphoryl-undecaprenol N-acetylglucosamine transferase of Cytophaga hutchinsonii (strain ATCC 33406 / DSM 1761 / CIP 103989 / NBRC 15051 / NCIMB 9469 / D465).